A 231-amino-acid chain; its full sequence is Protein OPG061 (231 aa).

This sequence belongs to the orthopoxvirus OPG058 family.

It localises to the host nucleus. The protein localises to the host nucleolus. This chain is Protein OPG061 (OPG061), found in Homo sapiens (Human).